Reading from the N-terminus, the 298-residue chain is Syntaxin-4 (298 aa).

Residues 1 to 274 (MRDRTHELRQ…NQKKARKKKV (274 aa)) are Cytoplasmic-facing. A phosphoserine mark is found at serine 15, serine 29, serine 35, serine 36, serine 117, serine 208, and serine 248. The stretch at 38–163 (DDEFFQKVQT…ERIRRQLKIT (126 aa)) forms a coiled coil. The segment at 154–298 (ERIRRQLKIT…VIIGITITVG (145 aa)) is interaction with CENPF. Positions 200 to 262 (LNEISARHSE…ERGQEHVKIA (63 aa)) constitute a t-SNARE coiled-coil homology domain. The chain crosses the membrane as a helical; Anchor for type IV membrane protein span at residues 275–295 (MIAICVSVTVLILAVIIGITI). Residues 296–298 (TVG) lie on the Extracellular side of the membrane.

The protein belongs to the syntaxin family. As to quaternary structure, found in a complex with VAMP8 and SNAP23. Detected in a complex with SNAP23 and STXBP4. Interacts with SNAP23 and SNAPIN. Interacts with VAMP2. Interacts with LLGL1. Interacts (via C-terminus) with CENPF. Interacts with DOC2B. Interacts with STXBP3; excludes interaction with DOC2B and SNAP25. Interacts with STXBP4; excludes interaction with VAMP2. Component of the SNARE complex composed of STX4, SNAP23 and VAMP7 that interacts with SYT7 during lysosomal exocytosis. Interacts with STXBP6. Interacts with STXBP5L. In terms of tissue distribution, expressed in all tissues tested including adipose, brain, testis, intestine, liver, heart, spleen, skeletal muscle and kidney.

Its subcellular location is the cell membrane. The protein resides in the cell projection. It localises to the neuron projection. It is found in the stereocilium. In terms of biological role, plasma membrane t-SNARE that mediates docking of transport vesicles. Necessary for the translocation of SLC2A4 from intracellular vesicles to the plasma membrane. In neurons, recruited at neurite tips to membrane domains rich in the phospholipid 1-oleoyl-2-palmitoyl-PC (OPPC) which promotes neurite tip surface expression of the dopamine transporter SLC6A3/DAT by facilitating fusion of SLC6A3-containing transport vesicles with the plasma membrane. Together with STXB3 and VAMP2, may also play a role in docking/fusion of intracellular GLUT4-containing vesicles with the cell surface in adipocytes and in docking of synaptic vesicles at presynaptic active zones. Required for normal hearing. This chain is Syntaxin-4 (Stx4), found in Rattus norvegicus (Rat).